A 276-amino-acid chain; its full sequence is MTETDGFYKSREVFDPAEQYKMDHKRRGVALIFNHERFFWHLTLPERRGTNADRDNLTRRFSDLGFEVKCFNDLRAEELLLKIHEVSTSSHIDADCFICVFLSHGEGNHVYAYDAKIEIQTLTGLFKGDKCQSLVGKPKIFIIQACRGSQHDVPVVPLDMVDHQTDKLDNVTQVDAASVYTLPAGADFLMCYSVAEGYYSHRETVNGSWYIQDLCEMLARYGSSLEFTELLTLVNRKVSQRRVDFCKDPDAIGKKQVPCFASMLTKKLHFCPKPSK.

The propeptide occupies 1 to 5 (MTETD). The tri-arginine exosite stretch occupies residues 25 to 27 (KRR). At S62 the chain carries Phosphoserine. H104 is an active-site residue. Residues 108 to 125 (NHVYAYDAKIEIQTLTGL) are 130's region. Residue C146 is part of the active site. The propeptide occupies 163–175 (HQTDKLDNVTQVD). At S239 the chain carries Phosphoserine. S-palmitoyl cysteine attachment occurs at residues C246 and C259.

This sequence belongs to the peptidase C14A family. In terms of assembly, heterotetramer that consists of two anti-parallel arranged heterodimers, each one formed by a 18 kDa (p18) and a 11 kDa (p11) subunit. Interacts with BIRC6/bruce. Interacts with RIPK3. As to quaternary structure, heterotetramer that consists of two anti-parallel arranged heterodimers, each one formed by a 18 kDa (Caspase-6 subunit p18) and a 11 kDa (Caspase-6 subunit p11) subunit. Phosphorylated by NUAK1; phosphorylation inhibits self-activation. Phosphorylation at Ser-239 by AMP-activated protein kinase (PRKAA1 or PRKAA2) inhibits autocleavage, preventing caspase activation, thereby preventing hepatocyte apoptosis. Post-translationally, palmitoylation by ZDHHC17 blocks dimerization and subsequent activation, leading to inhibit the cysteine protease activity. In terms of processing, can be cleaved and activated by different caspases, depending on the context. Cleaved and activated by caspase-8 (CASP8) and subsequently by caspase-3 (CASP3). Can also undergo autoactivation by mediating autocleavage at Asp-162 and Asp-175, while it is not able to cleave its N-terminal disordered prodomain. Cleaved and activated by CASP1, possibly in the context of inflammation. In terms of tissue distribution, highly expressed in lung, liver, kidney, testis, and heart. Lower levels in spleen, skeletal muscle and brain. Expressed in neurons.

It localises to the cytoplasm. Its subcellular location is the nucleus. The enzyme catalyses Strict requirement for Asp at position P1 and has a preferred cleavage sequence of Val-Glu-His-Asp-|-.. With respect to regulation, during activation, the N-terminal disordered prodomain is removed by cleavage. Concomitantly, double cleavage gives rise to a large 18-kDa and a small 11-kDa subunit. The two large and two small subunits then assemble to form the active CASP6 complex. Can be cleaved and activated by different caspases, depending on the context. Cleaved and activated by caspase-8 (CASP8) and subsequently by caspase-3 (CASP3). Can also undergo autoactivation by mediating autocleavage at Asp-162 and Asp-175, while it is not able to cleave its N-terminal disordered prodomain. Intramolecular cleavage at Asp-175 is a prerequisite for CASP6 self-activation. Cleaved and activated by CASP1 in neurons, possibly in the context of inflammation. Phosphorylation at Ser-239 inhibits autocleavage, preventing caspase activation. Cysteine protease that plays essential roles in programmed cell death, axonal degeneration, development and innate immunity. Acts as a non-canonical executioner caspase during apoptosis: localizes in the nucleus and cleaves the nuclear structural protein NUMA1 and lamin A/LMNA thereby inducing nuclear shrinkage and fragmentation. Lamin-A/LMNA cleavage is required for chromatin condensation and nuclear disassembly during apoptotic execution. Acts as a regulator of liver damage by promoting hepatocyte apoptosis: in absence of phosphorylation by AMP-activated protein kinase (AMPK), catalyzes cleavage of BID, leading to cytochrome c release, thereby participating in nonalcoholic steatohepatitis. Cleaves PARK7/DJ-1 in cells undergoing apoptosis. Involved in intrinsic apoptosis by mediating cleavage of RIPK1. Furthermore, cleaves many transcription factors such as NF-kappa-B and cAMP response element-binding protein/CREBBP. Cleaves phospholipid scramblase proteins XKR4 and XKR9. In addition to apoptosis, involved in different forms of programmed cell death. Plays an essential role in defense against viruses by acting as a central mediator of the ZBP1-mediated pyroptosis, apoptosis, and necroptosis (PANoptosis), independently of its cysteine protease activity. PANoptosis is a unique inflammatory programmed cell death, which provides a molecular scaffold that allows the interactions and activation of machinery required for inflammasome/pyroptosis, apoptosis and necroptosis. Mechanistically, interacts with RIPK3 and enhances the interaction between RIPK3 and ZBP1, leading to ZBP1-mediated inflammasome activation and cell death. Plays an essential role in axon degeneration during axon pruning which is the remodeling of axons during neurogenesis but not apoptosis. Regulates B-cell programs both during early development and after antigen stimulation. In terms of biological role, (Microbial infection) Proteolytically cleaves the N protein of coronaviruses. The cleavage leads to two fragments and modulates coronavirus replication by regulating IFN signaling. The two fragments produced by the cleavage interact with IRF3 inhibiting its nuclear translocation after activation and reduce the expression of IFNB and IFN-stimulated genes. This is Caspase-6 from Mus musculus (Mouse).